Reading from the N-terminus, the 228-residue chain is Probable septum site-determining protein MinC (228 aa).

This sequence belongs to the MinC family. As to quaternary structure, interacts with MinD and FtsZ.

Functionally, cell division inhibitor that blocks the formation of polar Z ring septums. Rapidly oscillates between the poles of the cell to destabilize FtsZ filaments that have formed before they mature into polar Z rings. Prevents FtsZ polymerization. The protein is Probable septum site-determining protein MinC of Yersinia enterocolitica serotype O:8 / biotype 1B (strain NCTC 13174 / 8081).